We begin with the raw amino-acid sequence, 220 residues long: MPGAALPSLLAWLAVLLLGRARPADACSCSPIHPQQAFCNADVVIRAKRVSAKEVDSGNDIYGNPIKRIQYEVKQIKMFKGPDQDIEFIYTAPSTEVCGQPLDTGGKKEYLIAGKSEGDGKMHITLCDLVATWDSVSPTQKKSLNQRYQMGCECKISRCLSIPCFVSSSDECLWTDWAMEKIVGGRQAKHYACIKRSDGSCAWYRGMAPPKQEFLDIEDP.

An N-terminal signal peptide occupies residues M1 to A26. Position 27 (C27) interacts with Zn(2+). Involved in metalloproteinase-binding regions lie at residues C27–S30 and T95–E96. 6 disulfides stabilise this stretch: C27–C98, C29–C127, C39–C152, C154–C201, C159–C164, and C172–C193. Residues C27–C152 enclose the NTR domain.

This sequence belongs to the protease inhibitor I35 (TIMP) family. Post-translationally, the activity of TIMP2 is dependent on the presence of disulfide bonds.

The protein localises to the secreted. Complexes with metalloproteinases (such as collagenases) and irreversibly inactivates them by binding to their catalytic zinc cofactor. The protein is Metalloproteinase inhibitor 2 (TIMP2) of Gallus gallus (Chicken).